The chain runs to 118 residues: uncharacterized protein (118 aa).

A disordered region spans residues 25–85; the sequence is AEQPGSGGIA…SSSSTPSRAR (61 aa). Positions 71–83 are enriched in low complexity; the sequence is RPSASSSSSTPSR.

This is an uncharacterized protein from Azospirillum brasilense.